We begin with the raw amino-acid sequence, 299 residues long: Taste receptor type 2 member 50 (299 aa).

Position 1 (Met1) is a topological domain, extracellular. A helical transmembrane segment spans residues 2 to 22 (ITFLYIFFSILIMVLFVLGNF). Residues 23–55 (ANGFIALVNFIDWVKRKKISSADQILTALAVSR) are Cytoplasmic-facing. The helical transmembrane segment at 56 to 76 (IGLLWALLLNWYLTVLNPAFY) threads the bilayer. Over 77 to 87 (SVELRITSYNA) the chain is Extracellular. The helical transmembrane segment at 88–108 (WVVTNHFSMWLAANLSIFYLL) threads the bilayer. Over 109–126 (KIANFSNLLFLHLKRRVR) the chain is Cytoplasmic. A helical transmembrane segment spans residues 127–147 (SVILVILLGTLIFLVCHLLVA). Residues 148-181 (NMDESMWAEEYEGNMTGKMKLRNTVHLSYLTVTT) are Extracellular-facing. An N-linked (GlcNAc...) asparagine glycan is attached at Asn161. The chain crosses the membrane as a helical span at residues 182–202 (LWSFIPFTLSLISFLMLICSL). Topologically, residues 203 to 229 (CKHLKKMQLHGEGSQDLSTKVHIKALQ) are cytoplasmic. The chain crosses the membrane as a helical span at residues 230–250 (TLISFLLLCAIFFLFLIVSVW). Over 251 to 259 (SPRRLRNDP) the chain is Extracellular. A helical membrane pass occupies residues 260–280 (VVMVSKAVGNIYLAFDSFILI). Residues 281-299 (WRTKKLKHTFLLILCQIRC) lie on the Cytoplasmic side of the membrane.

It belongs to the G-protein coupled receptor T2R family. As to expression, expressed in subsets of taste receptor cells of the tongue and exclusively in gustducin-positive cells.

It localises to the membrane. Functionally, receptor that may play a role in the perception of bitterness and is gustducin-linked. May play a role in sensing the chemical composition of the gastrointestinal content. The activity of this receptor may stimulate alpha gustducin, mediate PLC-beta-2 activation and lead to the gating of TRPM5. The sequence is that of Taste receptor type 2 member 50 (TAS2R50) from Homo sapiens (Human).